We begin with the raw amino-acid sequence, 426 residues long: Flotillin-1 (426 aa).

It belongs to the band 7/mec-2 family. Flotillin subfamily. Heterooligomeric complex of flotillins 1 and 2 and caveolins 1 and 2. In terms of tissue distribution, expressed in brain and ventral nerve cord from stage 12-16 of embryogenesis.

It is found in the cell membrane. The protein resides in the membrane. The protein localises to the caveola. May act as a scaffolding protein within caveolar membranes, functionally participating in formation of caveolae or caveolae-like vesicles. This Drosophila melanogaster (Fruit fly) protein is Flotillin-1.